We begin with the raw amino-acid sequence, 137 residues long: Ribosome-binding factor A (137 aa).

This sequence belongs to the RbfA family. Monomer. Binds 30S ribosomal subunits, but not 50S ribosomal subunits or 70S ribosomes.

It is found in the cytoplasm. In terms of biological role, one of several proteins that assist in the late maturation steps of the functional core of the 30S ribosomal subunit. Associates with free 30S ribosomal subunits (but not with 30S subunits that are part of 70S ribosomes or polysomes). Required for efficient processing of 16S rRNA. May interact with the 5'-terminal helix region of 16S rRNA. In Shewanella amazonensis (strain ATCC BAA-1098 / SB2B), this protein is Ribosome-binding factor A.